The chain runs to 209 residues: Large ribosomal subunit protein uL3 (209 aa).

Residue Gln150 is modified to N5-methylglutamine.

Belongs to the universal ribosomal protein uL3 family. Part of the 50S ribosomal subunit. Forms a cluster with proteins L14 and L19. In terms of processing, methylated by PrmB.

Functionally, one of the primary rRNA binding proteins, it binds directly near the 3'-end of the 23S rRNA, where it nucleates assembly of the 50S subunit. The sequence is that of Large ribosomal subunit protein uL3 from Vibrio vulnificus (strain YJ016).